Reading from the N-terminus, the 173-residue chain is Invasion protein B homolog BruAb1_0366 (173 aa).

Residues 1–23 (MKNYRAIGLAFTFTALSSLSAFA) form the signal peptide.

Belongs to the IalB family.

The sequence is that of Invasion protein B homolog BruAb1_0366 from Brucella abortus biovar 1 (strain 9-941).